The sequence spans 362 residues: Probable protein phosphatase 2C 24 (362 aa).

A PPM-type phosphatase domain is found at 77 to 360; sequence RYGVSSVCGR…DNVSVVVIDL (284 aa). The Mn(2+) site is built by Asp117, Gly118, Asp295, and Asp351.

Belongs to the PP2C family. The cofactor is Mg(2+). Mn(2+) is required as a cofactor.

The enzyme catalyses O-phospho-L-seryl-[protein] + H2O = L-seryl-[protein] + phosphate. The catalysed reaction is O-phospho-L-threonyl-[protein] + H2O = L-threonyl-[protein] + phosphate. The protein is Probable protein phosphatase 2C 24 of Arabidopsis thaliana (Mouse-ear cress).